The following is a 306-amino-acid chain: tRNA dimethylallyltransferase (306 aa).

Position 9–16 (Gly9–Thr16) interacts with ATP. Thr11 to Thr16 contacts substrate. Residues Asp34–Gln37 are interaction with substrate tRNA.

The protein belongs to the IPP transferase family. In terms of assembly, monomer. Mg(2+) serves as cofactor.

It carries out the reaction adenosine(37) in tRNA + dimethylallyl diphosphate = N(6)-dimethylallyladenosine(37) in tRNA + diphosphate. Functionally, catalyzes the transfer of a dimethylallyl group onto the adenine at position 37 in tRNAs that read codons beginning with uridine, leading to the formation of N6-(dimethylallyl)adenosine (i(6)A). The polypeptide is tRNA dimethylallyltransferase (Lactobacillus acidophilus (strain ATCC 700396 / NCK56 / N2 / NCFM)).